The primary structure comprises 574 residues: Frizzled-7 (574 aa).

Positions 1 to 32 are cleaved as a signal peptide; it reads MRDPGAAAPLSSLGLCALVLALLGALSAGAGA. Topologically, residues 33-256 are extracellular; that stretch reads QPYHGEKGIS…EEERRFARLW (224 aa). The FZ domain maps to 44-163; sequence PDHGFCQPIS…HGAGEICVGQ (120 aa). Disulfide bonds link Cys49/Cys110, Cys57/Cys103, Cys94/Cys131, Cys120/Cys160, and Cys124/Cys148. Asn63 is a glycosylation site (N-linked (GlcNAc...) asparagine). Residue Asn164 is glycosylated (N-linked (GlcNAc...) asparagine). Residues 257 to 277 form a helical membrane-spanning segment; sequence VGVWSVLCCASTLFTVLTYLV. Residues 278 to 288 are Cytoplasmic-facing; it reads DMRRFSYPERP. The helical transmembrane segment at 289–309 threads the bilayer; sequence IIFLSGCYFMVAVAHVAGFLL. Residues 310–336 lie on the Extracellular side of the membrane; that stretch reads EDRAVCVERFSDDGYRTVAQGTKKEGC. A helical membrane pass occupies residues 337 to 357; sequence TILFMVLYFFGMASSIWWVIL. At 358 to 379 the chain is on the cytoplasmic side; sequence SLTWFLAAGMKWGHEAIEANSQ. Residues 380-400 traverse the membrane as a helical segment; sequence YFHLAAWAVPAVKTITILAMG. The Extracellular portion of the chain corresponds to 401–423; sequence QVDGDLLSGVCYVGLSSVDALRG. A helical transmembrane segment spans residues 424-444; that stretch reads FVLAPLFVYLFIGTSFLLAGF. The Cytoplasmic portion of the chain corresponds to 445 to 470; sequence VSLFRIRTIMKHDGTKTEKLEKLMVR. The helical transmembrane segment at 471–491 threads the bilayer; sequence IGVFSVLYTVPATIVLACYFY. Topologically, residues 492 to 528 are extracellular; the sequence is EQAFREHWERTWLLQTCKSYAVPCPPGHFPPMSPDFT. A helical membrane pass occupies residues 529 to 549; the sequence is VFMIKYLMTMIVGITTGFWIW. At 550–574 the chain is on the cytoplasmic side; it reads SGKTLQSWRRFYHRLSHSSKGETAV. The short motif at 552 to 557 is the Lys-Thr-X-X-X-Trp motif, mediates interaction with the PDZ domain of Dvl family members element; the sequence is KTLQSW. The PDZ-binding motif lies at 572-574; that stretch reads TAV.

It belongs to the G-protein coupled receptor Fz/Smo family. As to quaternary structure, interacts with MAGI3. Interacts with DVL1. Interacts with CCDC88C/DAPLE; the interaction displaces DVL1 from FZD7, leading to inhibition of canonical Wnt signaling and triggering of non-canonical Wnt responses. Interacts with MYOC. Binds to SDCBP; this interaction is increased by inositol trisphosphate (IP3). Interacts with glypican GPC3. In terms of assembly, (Microbial infection) Interacts with C.difficile toxin TcdB; frizzled receptors constitute the major host receptors for TcdB in the colonic epithelium. In terms of processing, ubiquitinated by ZNRF3, leading to its degradation by the proteasome. As to expression, high expression in adult skeletal muscle and fetal kidney, followed by fetal lung, adult heart, brain, and placenta. Specifically expressed in squamous cell esophageal carcinomas.

The protein resides in the cell membrane. It is found in the endosome membrane. Functionally, receptor for Wnt proteins. Most frizzled receptors are coupled to the beta-catenin canonical signaling pathway, which leads to the activation of disheveled proteins, inhibition of GSK-3 kinase, nuclear accumulation of beta-catenin and activation of Wnt target genes. A second signaling pathway involving PKC and calcium fluxes has been seen for some family members, but it is not yet clear if it represents a distinct pathway or if it can be integrated in the canonical pathway, as PKC seems to be required for Wnt-mediated inactivation of GSK-3 kinase. Both pathways seem to involve interactions with G-proteins. Activation by WNT8 induces expression of beta-catenin target genes. Following ligand activation, binds to CCDC88C/DAPLE which displaces DVL1 from FZD7 and leads to inhibition of canonical Wnt signaling, activation of G-proteins by CCDC88C and triggering of non-canonical Wnt responses. May be involved in transduction and intercellular transmission of polarity information during tissue morphogenesis and/or in differentiated tissues. Its function is as follows. (Microbial infection) Acts as a receptor for C.difficile toxin TcdB in the colonic epithelium. The protein is Frizzled-7 (FZD7) of Homo sapiens (Human).